The primary structure comprises 134 residues: Phosphoribosyl-AMP cyclohydrolase (134 aa).

Residue Asp-80 participates in Mg(2+) binding. Position 81 (Cys-81) interacts with Zn(2+). Positions 82 and 84 each coordinate Mg(2+). Residues Cys-98 and Cys-105 each coordinate Zn(2+).

Belongs to the PRA-CH family. In terms of assembly, homodimer. Mg(2+) serves as cofactor. The cofactor is Zn(2+).

The protein resides in the cytoplasm. The enzyme catalyses 1-(5-phospho-beta-D-ribosyl)-5'-AMP + H2O = 1-(5-phospho-beta-D-ribosyl)-5-[(5-phospho-beta-D-ribosylamino)methylideneamino]imidazole-4-carboxamide. Its pathway is amino-acid biosynthesis; L-histidine biosynthesis; L-histidine from 5-phospho-alpha-D-ribose 1-diphosphate: step 3/9. In terms of biological role, catalyzes the hydrolysis of the adenine ring of phosphoribosyl-AMP. This is Phosphoribosyl-AMP cyclohydrolase from Bordetella avium (strain 197N).